Here is a 591-residue protein sequence, read N- to C-terminus: Aspartate--tRNA ligase (591 aa).

Glu176 is an L-aspartate binding site. The interval 200–203 (QILK) is aspartate. L-aspartate is bound at residue Arg222. ATP is bound by residues 222–224 (RDE) and Gln231. His450 provides a ligand contact to L-aspartate. ATP is bound at residue Glu484. Arg491 is a binding site for L-aspartate. ATP is bound at residue 536–539 (GLDR).

Belongs to the class-II aminoacyl-tRNA synthetase family. Type 1 subfamily. In terms of assembly, homodimer.

It is found in the cytoplasm. It carries out the reaction tRNA(Asp) + L-aspartate + ATP = L-aspartyl-tRNA(Asp) + AMP + diphosphate. In terms of biological role, catalyzes the attachment of L-aspartate to tRNA(Asp) in a two-step reaction: L-aspartate is first activated by ATP to form Asp-AMP and then transferred to the acceptor end of tRNA(Asp). This is Aspartate--tRNA ligase from Listeria monocytogenes serovar 1/2a (strain ATCC BAA-679 / EGD-e).